The chain runs to 209 residues: Glutathione S-transferase (209 aa).

The GST N-terminal domain occupies 7 to 91; it reads FFFFFFFFFS…YLSKKYNISG (85 aa). Glutathione is bound by residues 62 to 63, 75 to 76, aspartate 109, lysine 121, and threonine 125; these read QV and QS. The GST C-terminal domain occupies 93-209; the sequence is GELNEFYADM…YIANRKESVY (117 aa).

The protein belongs to the GST superfamily. Homodimer. In the absence of ligands two homodimers may interact to form a tetramer.

It catalyses the reaction RX + glutathione = an S-substituted glutathione + a halide anion + H(+). Functionally, conjugation of reduced glutathione to a wide number of exogenous and endogenous hydrophobic electrophiles. May also function as a storage protein or ligandin for parasitotoxic ferriprotoporphyrin IX (hemin). This chain is Glutathione S-transferase, found in Plasmodium yoelii yoelii.